The primary structure comprises 163 residues: uncharacterized protein (163 aa).

This is an uncharacterized protein from Methanocaldococcus jannaschii (strain ATCC 43067 / DSM 2661 / JAL-1 / JCM 10045 / NBRC 100440) (Methanococcus jannaschii).